Here is a 142-residue protein sequence, read N- to C-terminus: Transcription antitermination protein NusB (142 aa).

The protein belongs to the NusB family.

Involved in transcription antitermination. Required for transcription of ribosomal RNA (rRNA) genes. Binds specifically to the boxA antiterminator sequence of the ribosomal RNA (rrn) operons. The chain is Transcription antitermination protein NusB from Thermotoga petrophila (strain ATCC BAA-488 / DSM 13995 / JCM 10881 / RKU-1).